A 154-amino-acid chain; its full sequence is CASP-like protein 5B3 (154 aa).

Residues 1 to 17 (MKDVVGSPGTWSGMSLR) lie on the Cytoplasmic side of the membrane. A helical membrane pass occupies residues 18–38 (VSQCVFAGASVVAMASAYGFS). The N-linked (GlcNAc...) asparagine glycan is linked to Asn39. The Extracellular portion of the chain corresponds to 39–42 (NYTA). The chain crosses the membrane as a helical span at residues 43 to 63 (FCYLIASMGLQLLWSFGLACL). Residues 64–77 (DIYSLQTKRDLHNP) lie on the Cytoplasmic side of the membrane. A helical transmembrane segment spans residues 78 to 98 (VLVSLFVVGDWVTAILSFAAA). Residues 99–129 (SASAGVTILFERDVHFCRMYPQLSCGRYELS) are Extracellular-facing. Residues 130–150 (VILAFITWSFIATSAVSMFWL) form a helical membrane-spanning segment. Residues 151-154 (LASL) are Cytoplasmic-facing.

This sequence belongs to the Casparian strip membrane proteins (CASP) family. In terms of assembly, homodimer and heterodimers.

It is found in the cell membrane. The chain is CASP-like protein 5B3 from Oryza sativa subsp. indica (Rice).